Reading from the N-terminus, the 392-residue chain is G2/mitotic-specific cyclin-B2 (392 aa).

This sequence belongs to the cyclin family. Cyclin AB subfamily. In terms of assembly, interacts with the CDK1 protein kinase to form a serine/threonine kinase holoenzyme complex also known as maturation promoting factor (MPF). The cyclin subunit imparts substrate specificity to the complex.

In terms of biological role, essential for the control of the cell cycle at the G2/M (mitosis) transition. The protein is G2/mitotic-specific cyclin-B2 (CCNB2) of Rana japonica (Japanese reddish frog).